The primary structure comprises 670 residues: DNA ligase (670 aa).

NAD(+) is bound by residues 35–39 (DSVYD), 84–85 (SL), and glutamate 116. Residue lysine 118 is the N6-AMP-lysine intermediate of the active site. Arginine 139, glutamate 176, lysine 293, and lysine 317 together coordinate NAD(+). Zn(2+) contacts are provided by cysteine 411, cysteine 414, cysteine 429, and cysteine 435. One can recognise a BRCT domain in the interval 592 to 670 (VVKSEIAGKT…EEAFLKLLKS (79 aa)).

It belongs to the NAD-dependent DNA ligase family. LigA subfamily. Requires Mg(2+) as cofactor. Mn(2+) serves as cofactor.

It catalyses the reaction NAD(+) + (deoxyribonucleotide)n-3'-hydroxyl + 5'-phospho-(deoxyribonucleotide)m = (deoxyribonucleotide)n+m + AMP + beta-nicotinamide D-nucleotide.. Its function is as follows. DNA ligase that catalyzes the formation of phosphodiester linkages between 5'-phosphoryl and 3'-hydroxyl groups in double-stranded DNA using NAD as a coenzyme and as the energy source for the reaction. It is essential for DNA replication and repair of damaged DNA. In Coxiella burnetii (strain RSA 331 / Henzerling II), this protein is DNA ligase.